The chain runs to 143 residues: MFMGEYHHNLDSKGRLIIPAKFRVEIGDKMIFTRGMEGCIFGYPIEEWQKIEAKLAKLPLTKRSARKFTRLFYSGAMESEFDKQGRVNLTMTLKEHAALIKECVIVGVSNRIEIWSAERWNDFSEEANENYDDIAEDLDDIEL.

SpoVT-AbrB domains lie at 5-47 (EYHH…PIEE) and 76-119 (AMES…SAER).

This sequence belongs to the MraZ family. Forms oligomers.

It localises to the cytoplasm. It is found in the nucleoid. This chain is Transcriptional regulator MraZ, found in Lactobacillus johnsonii (strain CNCM I-12250 / La1 / NCC 533).